A 361-amino-acid chain; its full sequence is Pseudouridine-5'-phosphate glycosidase (361 aa).

Glu-27 serves as the catalytic Proton donor. The substrate site is built by Lys-88 and Val-108. Asp-140 contributes to the Mn(2+) binding site. 142 to 144 (SAD) serves as a coordination point for substrate. Residue Lys-161 is the Nucleophile of the active site. Residues 306–361 (DRSPTDPAAPDPTAPDPAAPDPTAPDPAAPDSAAPDLAGPDPSAPDPAAVARAHRP) form a disordered region. The segment covering 312 to 333 (PAAPDPTAPDPAAPDPTAPDPA) has biased composition (pro residues). The segment covering 334–354 (APDSAAPDLAGPDPSAPDPAA) has biased composition (low complexity).

Belongs to the pseudouridine-5'-phosphate glycosidase family. Homotrimer. Requires Mn(2+) as cofactor.

It catalyses the reaction D-ribose 5-phosphate + uracil = psi-UMP + H2O. Functionally, catalyzes the reversible cleavage of pseudouridine 5'-phosphate (PsiMP) to ribose 5-phosphate and uracil. Functions biologically in the cleavage direction, as part of a pseudouridine degradation pathway. This is Pseudouridine-5'-phosphate glycosidase from Frankia alni (strain DSM 45986 / CECT 9034 / ACN14a).